The chain runs to 348 residues: Uroporphyrinogen decarboxylase (348 aa).

Substrate is bound by residues 27–31 (RQAGR), phenylalanine 46, aspartate 76, tyrosine 152, serine 207, and histidine 320.

Belongs to the uroporphyrinogen decarboxylase family. Homodimer.

The protein resides in the cytoplasm. The enzyme catalyses uroporphyrinogen III + 4 H(+) = coproporphyrinogen III + 4 CO2. It functions in the pathway porphyrin-containing compound metabolism; protoporphyrin-IX biosynthesis; coproporphyrinogen-III from 5-aminolevulinate: step 4/4. In terms of biological role, catalyzes the decarboxylation of four acetate groups of uroporphyrinogen-III to yield coproporphyrinogen-III. The polypeptide is Uroporphyrinogen decarboxylase (Bacillus cereus (strain B4264)).